We begin with the raw amino-acid sequence, 148 residues long: Thiol-disulfide oxidoreductase YkuV (148 aa).

One can recognise a Thioredoxin domain in the interval 2 to 145 (KLRQPMPELT…LEKRVNRVLA (144 aa)). Cysteine 41 and cysteine 44 are disulfide-bonded.

Monomer.

The protein localises to the cytoplasm. In terms of biological role, participates in various redox reactions through the reversible oxidation of its active center dithiol to a disulfide and catalyzes dithiol-disulfide exchange reactions. This is Thiol-disulfide oxidoreductase YkuV (ykuV) from Bacillus subtilis (strain 168).